Here is a 105-residue protein sequence, read N- to C-terminus: Cell division protein FtsL (105 aa).

Residues 1 to 22 (MIGNERHGLVGVIGADLIRNAK) are Cytoplasmic-facing. A helical membrane pass occupies residues 23 to 43 (IPLILLVAVLISAVLVVTTAH). Over 44–105 (RTRLLTAERE…DPSQENIVIK (62 aa)) the chain is Periplasmic.

The protein belongs to the FtsL family. As to quaternary structure, part of a complex composed of FtsB, FtsL and FtsQ.

The protein resides in the cell inner membrane. In terms of biological role, essential cell division protein. May link together the upstream cell division proteins, which are predominantly cytoplasmic, with the downstream cell division proteins, which are predominantly periplasmic. The chain is Cell division protein FtsL from Yersinia pestis.